The primary structure comprises 571 residues: Glutamate--tRNA ligase (571 aa).

Residues 114 to 124 (PNPNGPWHVGH) carry the 'HIGH' region motif. Positions 431-453 (KPLAGGPESASPPLHPNDEDRGR) are disordered.

Belongs to the class-I aminoacyl-tRNA synthetase family. Glutamate--tRNA ligase type 2 subfamily.

The protein resides in the cytoplasm. The enzyme catalyses tRNA(Glu) + L-glutamate + ATP = L-glutamyl-tRNA(Glu) + AMP + diphosphate. In terms of biological role, catalyzes the attachment of glutamate to tRNA(Glu) in a two-step reaction: glutamate is first activated by ATP to form Glu-AMP and then transferred to the acceptor end of tRNA(Glu). The sequence is that of Glutamate--tRNA ligase from Natronomonas pharaonis (strain ATCC 35678 / DSM 2160 / CIP 103997 / JCM 8858 / NBRC 14720 / NCIMB 2260 / Gabara) (Halobacterium pharaonis).